The sequence spans 429 residues: 3-phosphoshikimate 1-carboxyvinyltransferase (429 aa).

3-phosphoshikimate contacts are provided by Lys23, Ser24, and Arg28. Lys23 is a binding site for phosphoenolpyruvate. Phosphoenolpyruvate-binding residues include Gly94 and Arg126. 7 residues coordinate 3-phosphoshikimate: Ser171, Ser172, Gln173, Ser199, Asp316, Asn339, and Lys343. Residue Gln173 coordinates phosphoenolpyruvate. The active-site Proton acceptor is the Asp316. Phosphoenolpyruvate is bound by residues Arg347, Arg389, and Lys414.

Belongs to the EPSP synthase family. In terms of assembly, monomer.

It is found in the cytoplasm. It catalyses the reaction 3-phosphoshikimate + phosphoenolpyruvate = 5-O-(1-carboxyvinyl)-3-phosphoshikimate + phosphate. It functions in the pathway metabolic intermediate biosynthesis; chorismate biosynthesis; chorismate from D-erythrose 4-phosphate and phosphoenolpyruvate: step 6/7. Catalyzes the transfer of the enolpyruvyl moiety of phosphoenolpyruvate (PEP) to the 5-hydroxyl of shikimate-3-phosphate (S3P) to produce enolpyruvyl shikimate-3-phosphate and inorganic phosphate. The polypeptide is 3-phosphoshikimate 1-carboxyvinyltransferase (Idiomarina loihiensis (strain ATCC BAA-735 / DSM 15497 / L2-TR)).